The chain runs to 434 residues: D-amino acid dehydrogenase (434 aa).

3-17 is an FAD binding site; sequence VLVLGSGVIGTASAY.

Belongs to the DadA oxidoreductase family. It depends on FAD as a cofactor.

The enzyme catalyses a D-alpha-amino acid + A + H2O = a 2-oxocarboxylate + AH2 + NH4(+). It participates in amino-acid degradation; D-alanine degradation; NH(3) and pyruvate from D-alanine: step 1/1. Its function is as follows. Oxidative deamination of D-amino acids. The polypeptide is D-amino acid dehydrogenase (Pseudomonas putida (strain GB-1)).